The primary structure comprises 118 residues: Pterin-4-alpha-carbinolamine dehydratase (118 aa).

Belongs to the pterin-4-alpha-carbinolamine dehydratase family.

The catalysed reaction is (4aS,6R)-4a-hydroxy-L-erythro-5,6,7,8-tetrahydrobiopterin = (6R)-L-erythro-6,7-dihydrobiopterin + H2O. In terms of biological role, involved in tetrahydrobiopterin biosynthesis. Seems to both prevent the formation of 7-pterins and accelerate the formation of quinonoid-BH2. May also have a positive regulatory role in the expression of phhA. The polypeptide is Pterin-4-alpha-carbinolamine dehydratase (phhB) (Pseudomonas syringae pv. tomato (strain ATCC BAA-871 / DC3000)).